Consider the following 645-residue polypeptide: Developmental regulatory protein wetA (645 aa).

Disordered stretches follow at residues serine 158–lysine 187, threonine 201–proline 249, tyrosine 284–tryptophan 376, alanine 461–serine 578, and glycine 596–arginine 618. Over residues threonine 240–proline 249 the composition is skewed to polar residues. Basic residues-rich tracts occupy residues glutamine 315 to glutamine 326 and glutamine 351 to glutamine 361. Residues glutamine 362–glutamine 373 are compositionally biased toward low complexity. Polar residues predominate over residues glycine 509–aspartate 518. Residues serine 528–serine 546 are compositionally biased toward low complexity. Residues isoleucine 562 to glycine 572 show a composition bias toward polar residues.

This sequence belongs to the wetA family.

In terms of biological role, brlA, abaA and wetA are pivotal regulators of conidiophore development and conidium maturation. They act individually and together to regulate their own expression and that of numerous other sporulation-specific genes. BrlA, abaA and wetA act together to positively regulate the expression of the Pks1 gene cluster that mediates the biosynthesis of an anthraquinone derivative pigment that contributes to conidial pigmentation that provides protection from UV radiation, heat and cold stress. The chain is Developmental regulatory protein wetA from Metarhizium robertsii (strain ARSEF 23 / ATCC MYA-3075) (Metarhizium anisopliae (strain ARSEF 23)).